A 193-amino-acid chain; its full sequence is MRLCDRDIEAWLDDGRLVITPRPPTERISGATVDVRLGNQFRVFRGHTAAFIDLSGPKDEVSAALERVMSDEINLPEGEAFFLHPGELALAVTLESVTLPDNLVGWLDGRSSLARLGLMVHVTAHRIDPGWQGRIVLEFYNSGKLPLALRPGMMIGALSFEPLSGPAARPYNRRQDAKYKDQQGAVASRIDKD.

Residues 110–115, Asp128, 136–138, Tyr171, Lys178, and Gln182 contribute to the dCTP site; these read RSSLAR and VLE. The active-site Proton donor/acceptor is the Glu138. The disordered stretch occupies residues 169–193; it reads RPYNRRQDAKYKDQQGAVASRIDKD.

The protein belongs to the dCTP deaminase family. As to quaternary structure, homotrimer.

It carries out the reaction dCTP + H2O + H(+) = dUTP + NH4(+). It participates in pyrimidine metabolism; dUMP biosynthesis; dUMP from dCTP (dUTP route): step 1/2. Catalyzes the deamination of dCTP to dUTP. This chain is dCTP deaminase, found in Pectobacterium atrosepticum (strain SCRI 1043 / ATCC BAA-672) (Erwinia carotovora subsp. atroseptica).